We begin with the raw amino-acid sequence, 470 residues long: Uronate isomerase (470 aa).

Belongs to the metallo-dependent hydrolases superfamily. Uronate isomerase family.

It catalyses the reaction D-glucuronate = D-fructuronate. The enzyme catalyses aldehydo-D-galacturonate = keto-D-tagaturonate. The protein operates within carbohydrate metabolism; pentose and glucuronate interconversion. This chain is Uronate isomerase, found in Cutibacterium acnes (strain DSM 16379 / KPA171202) (Propionibacterium acnes).